We begin with the raw amino-acid sequence, 698 residues long: DNA ligase (698 aa).

NAD(+) is bound by residues 40–44, 89–90, and E123; these read DGEYD and SL. The N6-AMP-lysine intermediate role is filled by K125. NAD(+)-binding residues include R146, E184, K300, and K324. 4 residues coordinate Zn(2+): C418, C421, C436, and C442. Residues 620–698 enclose the BRCT domain; that stretch reads AGDSPLAGKT…EAEFRAMSGG (79 aa).

Belongs to the NAD-dependent DNA ligase family. LigA subfamily. It depends on Mg(2+) as a cofactor. Mn(2+) is required as a cofactor.

It catalyses the reaction NAD(+) + (deoxyribonucleotide)n-3'-hydroxyl + 5'-phospho-(deoxyribonucleotide)m = (deoxyribonucleotide)n+m + AMP + beta-nicotinamide D-nucleotide.. Functionally, DNA ligase that catalyzes the formation of phosphodiester linkages between 5'-phosphoryl and 3'-hydroxyl groups in double-stranded DNA using NAD as a coenzyme and as the energy source for the reaction. It is essential for DNA replication and repair of damaged DNA. This Rhodospirillum rubrum (strain ATCC 11170 / ATH 1.1.1 / DSM 467 / LMG 4362 / NCIMB 8255 / S1) protein is DNA ligase.